The sequence spans 331 residues: Pyruvate dehydrogenase E1 component subunit beta (331 aa).

E60 serves as a coordination point for thiamine diphosphate. K(+) contacts are provided by L113, A161, I162, D164, and N166.

As to quaternary structure, heterodimer of an alpha and a beta chain. Thiamine diphosphate serves as cofactor.

It localises to the plastid. It is found in the chloroplast. It carries out the reaction N(6)-[(R)-lipoyl]-L-lysyl-[protein] + pyruvate + H(+) = N(6)-[(R)-S(8)-acetyldihydrolipoyl]-L-lysyl-[protein] + CO2. Functionally, the pyruvate dehydrogenase complex catalyzes the overall conversion of pyruvate to acetyl-CoA and CO(2). It contains multiple copies of three enzymatic components: pyruvate dehydrogenase (E1), dihydrolipoamide acetyltransferase (E2) and lipoamide dehydrogenase (E3). This is Pyruvate dehydrogenase E1 component subunit beta (pdhB) from Porphyra purpurea (Red seaweed).